The sequence spans 190 residues: Xanthine phosphoribosyltransferase (190 aa).

2 residues coordinate xanthine: Leu-20 and Asn-27. 129–133 (ANGAA) provides a ligand contact to 5-phospho-alpha-D-ribose 1-diphosphate. Lys-157 provides a ligand contact to xanthine.

It belongs to the purine/pyrimidine phosphoribosyltransferase family. Xpt subfamily. Homodimer.

It localises to the cytoplasm. It carries out the reaction XMP + diphosphate = xanthine + 5-phospho-alpha-D-ribose 1-diphosphate. The protein operates within purine metabolism; XMP biosynthesis via salvage pathway; XMP from xanthine: step 1/1. Functionally, converts the preformed base xanthine, a product of nucleic acid breakdown, to xanthosine 5'-monophosphate (XMP), so it can be reused for RNA or DNA synthesis. This chain is Xanthine phosphoribosyltransferase, found in Laribacter hongkongensis (strain HLHK9).